The following is a 305-amino-acid chain: tRNA-cytidine(32) 2-sulfurtransferase (305 aa).

The interval 1 to 20 (MTAVLPLPHPLADPAPRDPR) is disordered. Residues 59 to 64 (SGGKDS) carry the PP-loop motif motif. Residues cysteine 134, cysteine 137, and cysteine 225 each contribute to the [4Fe-4S] cluster site. Residues 282–293 (DAPPDLAPDPGA) show a composition bias toward low complexity. The tract at residues 282–305 (DAPPDLAPDPGAWLTASDATHDSD) is disordered.

This sequence belongs to the TtcA family. In terms of assembly, homodimer. The cofactor is Mg(2+). [4Fe-4S] cluster serves as cofactor.

Its subcellular location is the cytoplasm. The enzyme catalyses cytidine(32) in tRNA + S-sulfanyl-L-cysteinyl-[cysteine desulfurase] + AH2 + ATP = 2-thiocytidine(32) in tRNA + L-cysteinyl-[cysteine desulfurase] + A + AMP + diphosphate + H(+). It participates in tRNA modification. Catalyzes the ATP-dependent 2-thiolation of cytidine in position 32 of tRNA, to form 2-thiocytidine (s(2)C32). The sulfur atoms are provided by the cysteine/cysteine desulfurase (IscS) system. The chain is tRNA-cytidine(32) 2-sulfurtransferase from Xanthomonas oryzae pv. oryzae (strain MAFF 311018).